The chain runs to 368 residues: tRNA-specific 2-thiouridylase MnmA (368 aa).

ATP is bound by residues 11–18 (GMSGGVDS) and methionine 37. The tract at residues 97-99 (NPD) is interaction with target base in tRNA. The Nucleophile role is filled by cysteine 102. Cysteine 102 and cysteine 199 are joined by a disulfide. Glycine 127 is a binding site for ATP. The interaction with tRNA stretch occupies residues 149–151 (KDQ). Cysteine 199 (cysteine persulfide intermediate) is an active-site residue. The interaction with tRNA stretch occupies residues 311–312 (RY).

It belongs to the MnmA/TRMU family. In terms of assembly, interacts with TusE.

Its subcellular location is the cytoplasm. The enzyme catalyses S-sulfanyl-L-cysteinyl-[protein] + uridine(34) in tRNA + AH2 + ATP = 2-thiouridine(34) in tRNA + L-cysteinyl-[protein] + A + AMP + diphosphate + H(+). Functionally, catalyzes the 2-thiolation of uridine at the wobble position (U34) of tRNA(Lys), tRNA(Glu) and tRNA(Gln), leading to the formation of s(2)U34, the first step of tRNA-mnm(5)s(2)U34 synthesis. Sulfur is provided by IscS, via a sulfur-relay system. Binds ATP and its substrate tRNAs. In Shigella flexneri serotype 5b (strain 8401), this protein is tRNA-specific 2-thiouridylase MnmA.